A 98-amino-acid chain; its full sequence is Aspartyl/glutamyl-tRNA(Asn/Gln) amidotransferase subunit C (98 aa).

The protein belongs to the GatC family. As to quaternary structure, heterotrimer of A, B and C subunits.

It carries out the reaction L-glutamyl-tRNA(Gln) + L-glutamine + ATP + H2O = L-glutaminyl-tRNA(Gln) + L-glutamate + ADP + phosphate + H(+). It catalyses the reaction L-aspartyl-tRNA(Asn) + L-glutamine + ATP + H2O = L-asparaginyl-tRNA(Asn) + L-glutamate + ADP + phosphate + 2 H(+). In terms of biological role, allows the formation of correctly charged Asn-tRNA(Asn) or Gln-tRNA(Gln) through the transamidation of misacylated Asp-tRNA(Asn) or Glu-tRNA(Gln) in organisms which lack either or both of asparaginyl-tRNA or glutaminyl-tRNA synthetases. The reaction takes place in the presence of glutamine and ATP through an activated phospho-Asp-tRNA(Asn) or phospho-Glu-tRNA(Gln). The sequence is that of Aspartyl/glutamyl-tRNA(Asn/Gln) amidotransferase subunit C from Kocuria rhizophila (strain ATCC 9341 / DSM 348 / NBRC 103217 / DC2201).